The primary structure comprises 425 residues: Malate transporter MleP (425 aa).

11 helical membrane-spanning segments follow: residues 11–31 (GISL…TLLG), 35–55 (LDMV…YFIG), 65–85 (LGGG…FHIV), 96–116 (FMGG…CGSI), 134–154 (IALI…MLIG), 196–216 (IFSQ…IGAL), 246–266 (IKLD…LLMA), 269–289 (ILNK…IVFI), 310–330 (VIMT…LIDL), 339–359 (WQFV…SWFL), and 401–421 (FAQM…GILI).

The protein belongs to the 2-hydroxycarboxylate transporter (2-HCT) (TC 2.A.24) family.

Its subcellular location is the cell membrane. It catalyses the reaction (S)-lactate(in) + (S)-malate(out) = (S)-lactate(out) + (S)-malate(in). It carries out the reaction (R)-lactate(in) + (S)-malate(out) = (R)-lactate(out) + (S)-malate(in). The enzyme catalyses glycolate(in) + (S)-malate(out) = glycolate(out) + (S)-malate(in). Secondary transporter involved in malolactic fermentation. Catalyzes the uptake of divalent malate into the cell coupled to the exit of monovalent lactate, a product of malate degradation (precursor/product exchange). The malate/lactate exchange is electrogenic and results in the generation of a membrane potential. Is highly selective for the S-enantiomer of malate. In the absence of lactate, MleP can also catalyze the proton-dependent transport of malate. In vitro, transports a range of substrates that contain the 2-hydroxycarboxylate motif, HO-CR(2)-COO(-), with a preference for malate, lactate and glycolate. Modification of the OH or the COO(-) groups of the 2-hydroxycarboxylate motif drastically reduces the affinity of the transporter for the substrates, indicating their relevance in substrate recognition. Significant activity is also observed with some 2-oxocarboxylates. Transports only poorly citromalate. Citrate binds to MleP but is not translocated. The sequence is that of Malate transporter MleP from Lactococcus lactis subsp. lactis (strain IL1403) (Streptococcus lactis).